Here is a 260-residue protein sequence, read N- to C-terminus: Glucosamine-6-phosphate deaminase (260 aa).

The Proton acceptor; for enolization step role is filled by Asp-67. The active-site For ring-opening step is Asp-136. The Proton acceptor; for ring-opening step role is filled by His-138. Glu-143 serves as the catalytic For ring-opening step.

It belongs to the glucosamine/galactosamine-6-phosphate isomerase family. NagB subfamily.

The enzyme catalyses alpha-D-glucosamine 6-phosphate + H2O = beta-D-fructose 6-phosphate + NH4(+). It functions in the pathway amino-sugar metabolism; N-acetylneuraminate degradation; D-fructose 6-phosphate from N-acetylneuraminate: step 5/5. Catalyzes the reversible isomerization-deamination of glucosamine 6-phosphate (GlcN6P) to form fructose 6-phosphate (Fru6P) and ammonium ion. The sequence is that of Glucosamine-6-phosphate deaminase from Arthrobacter sp. (strain FB24).